Consider the following 109-residue polypeptide: Homeobox protein E30 (109 aa).

A compositionally biased stretch (basic residues) spans 1 to 12; that stretch reads GPRTRRVKRSHN. The tract at residues 1–27 is disordered; that stretch reads GPRTRRVKRSHNGKNGSPEEKRPRTAF. Residues 20-79 constitute a DNA-binding region (homeobox); the sequence is EKRPRTAFSAEQLARLKREFAENRYLTERRRQQLSRDLGLTEAQIKIWFQNKRAKIKKAS.

It belongs to the engrailed homeobox family.

The protein resides in the nucleus. This chain is Homeobox protein E30, found in Apis mellifera (Honeybee).